The chain runs to 127 residues: Protein translocase subunit SecE (127 aa).

Transmembrane regions (helical) follow at residues 16-36, 41-61, and 96-116; these read AMKW…NYLY, LPLR…VALL, and IVAA…GILV.

The protein belongs to the SecE/SEC61-gamma family. Component of the Sec protein translocase complex. Heterotrimer consisting of SecY, SecE and SecG subunits. The heterotrimers can form oligomers, although 1 heterotrimer is thought to be able to translocate proteins. Interacts with the ribosome. Interacts with SecDF, and other proteins may be involved. Interacts with SecA.

The protein localises to the cell inner membrane. Functionally, essential subunit of the Sec protein translocation channel SecYEG. Clamps together the 2 halves of SecY. May contact the channel plug during translocation. The chain is Protein translocase subunit SecE from Salmonella typhi.